The chain runs to 244 residues: Dehydration-responsive element-binding protein 2E (244 aa).

The tract at residues 1–25 (MEKEDNGSKQSSSASVVSSRRRRRV) is disordered. A Nuclear localization signal motif is present at residues 20 to 46 (RRRRRVVEPVEATLQRWEEEGLARARR). Residues 69–134 (RFRGVRQRVW…YGPYARLNFP (66 aa)) constitute a DNA-binding region (AP2/ERF).

The protein belongs to the AP2/ERF transcription factor family. ERF subfamily. In terms of tissue distribution, expressed in xylem tissues, stigma, anthers and region where sepals and petals attach the peduncle.

It localises to the nucleus. Transcriptional activator that binds specifically to the DNA sequence 5'-[AG]CCGAC-3'. Binding to the C-repeat/DRE element mediates abscisic acid-inducible transcription. Involved in the regulation of plant development and tolerance to abiotic stresses. This Arabidopsis thaliana (Mouse-ear cress) protein is Dehydration-responsive element-binding protein 2E (DREB2E).